A 310-amino-acid chain; its full sequence is tRNA uridine(34) hydroxylase (310 aa).

A Rhodanese domain is found at 124–218 (SDPEVLLIDT…YFEEVAQEES (95 aa)). Residue Cys-178 is the Cysteine persulfide intermediate of the active site.

This sequence belongs to the TrhO family.

It catalyses the reaction uridine(34) in tRNA + AH2 + O2 = 5-hydroxyuridine(34) in tRNA + A + H2O. Functionally, catalyzes oxygen-dependent 5-hydroxyuridine (ho5U) modification at position 34 in tRNAs. The sequence is that of tRNA uridine(34) hydroxylase from Pseudomonas entomophila (strain L48).